Consider the following 132-residue polypeptide: Ribosome-binding factor A (132 aa).

The protein belongs to the RbfA family. In terms of assembly, monomer. Binds 30S ribosomal subunits, but not 50S ribosomal subunits or 70S ribosomes.

Its subcellular location is the cytoplasm. Functionally, one of several proteins that assist in the late maturation steps of the functional core of the 30S ribosomal subunit. Associates with free 30S ribosomal subunits (but not with 30S subunits that are part of 70S ribosomes or polysomes). Required for efficient processing of 16S rRNA. May interact with the 5'-terminal helix region of 16S rRNA. The sequence is that of Ribosome-binding factor A from Burkholderia multivorans (strain ATCC 17616 / 249).